The following is a 416-amino-acid chain: PDZ and LIM domain protein 7 (416 aa).

One can recognise a PDZ domain in the interval 1-85; it reads MESYKVMLNG…RLCLTLSRAQ (85 aa). Disordered stretches follow at residues 145 to 191 and 202 to 221; these read CTPQ…AVDP and TSTV…MQNR. Low complexity predominate over residues 168 to 181; it reads PGLAPRTPAATPGP. 3 LIM zinc-binding domains span residues 239 to 297, 298 to 357, and 358 to 416; these read PLCY…TRYA, PSCA…MFGT, and KCRG…FSHV.

As to quaternary structure, interacts with various PKC isoforms through the LIM zinc-binding domains. Interacts with TPM2. Interacts with TBX4 and TBX5.

The protein localises to the cytoplasm. It localises to the cytoskeleton. It is found in the myofibril. Its subcellular location is the sarcomere. The protein resides in the z line. Functionally, may function as a scaffold on which the coordinated assembly of proteins can occur. May play a role as an adapter that, via its PDZ domain, localizes LIM-binding proteins to actin filaments of both skeletal muscle and nonmuscle tissues. May be involved in bone formation. The sequence is that of PDZ and LIM domain protein 7 (PDLIM7) from Gallus gallus (Chicken).